The sequence spans 607 residues: Translation initiation factor IF-2 (607 aa).

Residues serine 54–alanine 93 are disordered. A compositionally biased stretch (low complexity) spans threonine 62 to alanine 93. The 174-residue stretch at histidine 108–lysine 281 folds into the tr-type G domain. The G1 stretch occupies residues glycine 117–threonine 124. Residue glycine 117–threonine 124 coordinates GTP. Residues glycine 142–histidine 146 form a G2 region. Residues aspartate 163–glycine 166 are G3. GTP contacts are provided by residues aspartate 163–histidine 167 and asparagine 217–aspartate 220. Positions asparagine 217–aspartate 220 are G4. The tract at residues serine 253 to lysine 255 is G5.

It belongs to the TRAFAC class translation factor GTPase superfamily. Classic translation factor GTPase family. IF-2 subfamily.

The protein localises to the cytoplasm. One of the essential components for the initiation of protein synthesis. Protects formylmethionyl-tRNA from spontaneous hydrolysis and promotes its binding to the 30S ribosomal subunits. Also involved in the hydrolysis of GTP during the formation of the 70S ribosomal complex. This is Translation initiation factor IF-2 from Deinococcus deserti (strain DSM 17065 / CIP 109153 / LMG 22923 / VCD115).